The following is an 868-amino-acid chain: MAMRAKGIRKNCQHLWRWGTMLLGMLMICSAAANLWVTVYYGVPVWKEATTTLFCASDAKAYDTEAHNVWATHACVPTNPNPQEVVLENVTENFNMWKNNMVEQMHEDIISLWDQSLKPCVKLTPLCVTLNCTDLNTNNTTNTTELSIIVVWEQRGKGEMRNCSFNITTSIRDKVQREYALFYKLDVEPIDDNKNTTNNTKYRLINCNTSVITQACPKVSFEPIPIHYCTPTGFALLKCNDKKFNGTGPCTNVSTVQCTHGIRPVVSTQLLLNGSLAEEEVVIRSENFTNNAKTIIVQLNVSVEINCTRPNNHTRKRVTLGPGRVWYTTGEILGNIRQAHCNISRAQWNNTLQQIATTLREQFGNKTIAFNQSSGGDPEIVMHSFNCGGEFFYCNSTQLFNSAWNVTSNGTWSVTRKQKDTGDIITLPCRIKQIINRWQVVGKAMYALPIKGLIRCSSNITGLLLTRDGGGENQTTEIFRPGGGDMRDNWRSELYKYKVVKIEPLGVAPTKAKRRVVQREKRAVGMLGAMFLGFLGAAGSTMGATSMALTVQARQLLSGIVQQQNNLLRAIKAQQHLLQLTVWGIKQLQARILAVERYLKDQQLLGFWGCSGKLICTTAVPWNASWSNKTLDQIWNNMTWMEWDREIDNYTHLIYTLIEESQNQQEKNQQELLQLDKWASLWTWSDITKWLWYIKIFIMIVGGLIGLRIVFAVLSIVNRVRQGYSPLSFQTLLPNPRGPDRPEGTEEGGGERGRDGSTRLVHGFLALVWDDLRSLCLFSYHRLRDLLLIVARIVELLGRRGWEVLKYWWNLLQYWSQELKNSAVSLVNVTAIAVAEGTDRVIEVVQRIYRAFLHIPRRIRQGFERALL.

Positions 1-33 are cleaved as a signal peptide; that stretch reads MAMRAKGIRKNCQHLWRWGTMLLGMLMICSAAA. Residues 34-696 lie on the Extracellular side of the membrane; sequence NLWVTVYYGV…ITKWLWYIKI (663 aa). C55 and C75 form a disulfide bridge. 21 N-linked (GlcNAc...) asparagine; by host glycosylation sites follow: N89, N131, N138, N139, N142, N162, N166, N195, N198, N208, N245, N252, N273, N287, N300, N306, N312, N342, N349, N365, and N371. 5 disulfide bridges follow: C120/C216, C127/C207, C132/C163, C229/C258, and C239/C250. Positions 132–162 are V1; sequence CTDLNTNNTTNTTELSIIVVWEQRGKGEMRN. Positions 163–207 are V2; that stretch reads CSFNITTSIRDKVQREYALFYKLDVEPIDDNKNTTNNTKYRLINC. The interval 307-340 is V3; that stretch reads CTRPNNHTRKRVTLGPGRVWYTTGEILGNIRQAH. A disulfide bridge connects residues C307 and C341. The segment at 373–383 is CD4-binding loop; it reads SSGGDPEIVMH. Cystine bridges form between C387–C456 and C394–C429. The interval 394-429 is V4; that stretch reads CNSTQLFNSAWNVTSNGTWSVTRKQKDTGDIITLPC. N395, N405, N409, N459, and N473 each carry an N-linked (GlcNAc...) asparagine; by host glycan. V5 stretches follow at residues 472–482 and 474–482; these read ENQTTEIFRPG and QTTEIFRPG. Residues 523–544 are fusion peptide; sequence AVGMLGAMFLGFLGAAGSTMGA. Residues 586-604 form an immunosuppression region; sequence KQLQARILAVERYLKDQQL. The cysteines at positions 610 and 616 are disulfide-linked. N-linked (GlcNAc...) asparagine; by host glycosylation is found at N623, N628, N637, and N649. A coiled-coil region spans residues 645 to 679; the sequence is REIDNYTHLIYTLIEESQNQQEKNQQELLQLDKWA. The interval 674 to 695 is MPER; binding to GalCer; it reads QLDKWASLWTWSDITKWLWYIK. Residues 697–717 form a helical membrane-spanning segment; that stretch reads FIMIVGGLIGLRIVFAVLSIV. The Cytoplasmic portion of the chain corresponds to 718 to 868; that stretch reads NRVRQGYSPL…IRQGFERALL (151 aa). A YXXL motif; contains endocytosis signal motif is present at residues 724–727; it reads YSPL. The tract at residues 731 to 755 is disordered; the sequence is TLLPNPRGPDRPEGTEEGGGERGRD. Positions 738–755 are enriched in basic and acidic residues; the sequence is GPDRPEGTEEGGGERGRD. A lipid anchor (S-palmitoyl cysteine; by host) is attached at C776. The Di-leucine internalization motif signature appears at 867–868; it reads LL.

The protein belongs to the HIV-1 env protein family. As to quaternary structure, the mature envelope protein (Env) consists of a homotrimer of non-covalently associated gp120-gp41 heterodimers. The resulting complex protrudes from the virus surface as a spike. There seems to be as few as 10 spikes on the average virion. Interacts with host CD4, CCR5 and CXCR4. Gp120 also interacts with the C-type lectins CD209/DC-SIGN and CLEC4M/DC-SIGNR (collectively referred to as DC-SIGN(R)). Gp120 and gp41 interact with GalCer. Gp120 interacts with host ITGA4/ITGB7 complex; on CD4+ T-cells, this interaction results in rapid activation of integrin ITGAL/LFA-1, which facilitates efficient cell-to-cell spreading of HIV-1. Gp120 interacts with cell-associated heparan sulfate; this interaction increases virus infectivity on permissive cells and may be involved in infection of CD4- cells. In terms of assembly, the mature envelope protein (Env) consists of a homotrimer of non-covalently associated gp120-gp41 heterodimers. The resulting complex protrudes from the virus surface as a spike. There seems to be as few as 10 spikes on the average virion. Highly glycosylated by host. The high number of glycan on the protein is reffered to as 'glycan shield' because it contributes to hide protein sequence from adaptive immune system. Post-translationally, palmitoylation of the transmembrane protein and of Env polyprotein (prior to its proteolytic cleavage) is essential for their association with host cell membrane lipid rafts. Palmitoylation is therefore required for envelope trafficking to classical lipid rafts, but not for viral replication. In terms of processing, specific enzymatic cleavages in vivo yield mature proteins. Envelope glycoproteins are synthesized as an inactive precursor that is heavily N-glycosylated and processed likely by host cell furin in the Golgi to yield the mature SU and TM proteins. The cleavage site between SU and TM requires the minimal sequence [KR]-X-[KR]-R. About 2 of the 9 disulfide bonds of gp41 are reduced by P4HB/PDI, following binding to CD4 receptor.

It localises to the virion membrane. The protein localises to the host cell membrane. It is found in the host endosome membrane. Its function is as follows. Oligomerizes in the host endoplasmic reticulum into predominantly trimers. In a second time, gp160 transits in the host Golgi, where glycosylation is completed. The precursor is then proteolytically cleaved in the trans-Golgi and thereby activated by cellular furin or furin-like proteases to produce gp120 and gp41. Attaches the virus to the host lymphoid cell by binding to the primary receptor CD4. This interaction induces a structural rearrangement creating a high affinity binding site for a chemokine coreceptor like CXCR4 and/or CCR5. Acts as a ligand for CD209/DC-SIGN and CLEC4M/DC-SIGNR, which are respectively found on dendritic cells (DCs), and on endothelial cells of liver sinusoids and lymph node sinuses. These interactions allow capture of viral particles at mucosal surfaces by these cells and subsequent transmission to permissive cells. HIV subverts the migration properties of dendritic cells to gain access to CD4+ T-cells in lymph nodes. Virus transmission to permissive T-cells occurs either in trans (without DCs infection, through viral capture and transmission), or in cis (following DCs productive infection, through the usual CD4-gp120 interaction), thereby inducing a robust infection. In trans infection, bound virions remain infectious over days and it is proposed that they are not degraded, but protected in non-lysosomal acidic organelles within the DCs close to the cell membrane thus contributing to the viral infectious potential during DCs' migration from the periphery to the lymphoid tissues. On arrival at lymphoid tissues, intact virions recycle back to DCs' cell surface allowing virus transmission to CD4+ T-cells. In terms of biological role, acts as a class I viral fusion protein. Under the current model, the protein has at least 3 conformational states: pre-fusion native state, pre-hairpin intermediate state, and post-fusion hairpin state. During fusion of viral and target intracellular membranes, the coiled coil regions (heptad repeats) assume a trimer-of-hairpins structure, positioning the fusion peptide in close proximity to the C-terminal region of the ectodomain. The formation of this structure appears to drive apposition and subsequent fusion of viral and target cell membranes. Complete fusion occurs in host cell endosomes and is dynamin-dependent, however some lipid transfer might occur at the plasma membrane. The virus undergoes clathrin-dependent internalization long before endosomal fusion, thus minimizing the surface exposure of conserved viral epitopes during fusion and reducing the efficacy of inhibitors targeting these epitopes. Membranes fusion leads to delivery of the nucleocapsid into the cytoplasm. The sequence is that of Envelope glycoprotein gp160 from Human immunodeficiency virus type 1 group M subtype B (isolate CDC-451) (HIV-1).